A 234-amino-acid polypeptide reads, in one-letter code: Large ribosomal subunit protein uL1 (234 aa).

This sequence belongs to the universal ribosomal protein uL1 family. Part of the 50S ribosomal subunit.

Binds directly to 23S rRNA. The L1 stalk is quite mobile in the ribosome, and is involved in E site tRNA release. In terms of biological role, protein L1 is also a translational repressor protein, it controls the translation of the L11 operon by binding to its mRNA. This is Large ribosomal subunit protein uL1 from Klebsiella pneumoniae (strain 342).